Here is a 200-residue protein sequence, read N- to C-terminus: Large ribosomal subunit protein uL4 (200 aa).

Residues T42–G65 form a disordered region.

It belongs to the universal ribosomal protein uL4 family. Part of the 50S ribosomal subunit.

Its function is as follows. One of the primary rRNA binding proteins, this protein initially binds near the 5'-end of the 23S rRNA. It is important during the early stages of 50S assembly. It makes multiple contacts with different domains of the 23S rRNA in the assembled 50S subunit and ribosome. Functionally, forms part of the polypeptide exit tunnel. The protein is Large ribosomal subunit protein uL4 of Aliivibrio fischeri (strain MJ11) (Vibrio fischeri).